Consider the following 206-residue polypeptide: MGSVGLLYVGAVLFVNGLMLLGTVPVRSASVLNLFVGALQCVVPTVMLIQAQGDSSAVLAASGLYLFGFTYLYVGISNLAGFEPEGIGWFSLFVACAALVYSFLSFTVSNDPVFGVIWLAWAALWTLFFLVLGLGRENLSRFTGWAAILLSQPTCTVPAFLILTGNFHTTPAVAAGWAGALLVLLGLAKILAAPKAAVPQPRPVFN.

The next 7 membrane-spanning stretches (helical) occupy residues 4-24 (VGLL…LGTV), 29-49 (ASVL…VMLI), 56-76 (SAVL…YVGI), 86-106 (GIGW…FLSF), 113-133 (VFGV…LVLG), 142-162 (FTGW…AFLI), and 173-193 (VAAG…ILAA).

This sequence belongs to the AmiS/UreI family.

Its subcellular location is the cell membrane. Possible transporter that might be responsible for the adsorption of amidase substrates or release of their hydrolysis products. The sequence is that of Putative transporter protein AmiS2 (amiS2) from Rhodococcus erythropolis (Arthrobacter picolinophilus).